A 175-amino-acid polypeptide reads, in one-letter code: O-acetyl-ADP-ribose deacetylase (175 aa).

Positions 1-175 (MAVQPEVILG…IYRRLLASYP (175 aa)) constitute a Macro domain. Substrate is bound by residues 11–12 (DI), asparagine 25, 33–35 (GVD), and 122–126 (STGVY). Residue aspartate 35 is the Proton acceptor of the active site.

Belongs to the MacroD-type family. YmdB subfamily. Homodimer. Interacts with RNase III.

The enzyme catalyses 3''-O-acetyl-ADP-D-ribose + H2O = ADP-D-ribose + acetate + H(+). The catalysed reaction is 2''-O-acetyl-ADP-D-ribose + H2O = ADP-D-ribose + acetate + H(+). Deacetylates O-acetyl-ADP ribose to yield ADP-ribose and free acetate. Down-regulates ribonuclease 3 (RNase III) activity. Acts by interacting directly with the region of the ribonuclease that is required for dimerization/activation. The protein is O-acetyl-ADP-ribose deacetylase of Klebsiella pneumoniae (strain 342).